The sequence spans 566 residues: Oxygen-dependent choline dehydrogenase (566 aa).

7-36 is an FAD binding site; the sequence is DYIICGAGSAGNVLATRLTEDPNVTVLLLE. Positions 182–204 are disordered; the sequence is YQQEGFGPMDRTVTPKGRRASTA. Histidine 474 functions as the Proton acceptor in the catalytic mechanism.

This sequence belongs to the GMC oxidoreductase family. Requires FAD as cofactor.

The enzyme catalyses choline + A = betaine aldehyde + AH2. The catalysed reaction is betaine aldehyde + NAD(+) + H2O = glycine betaine + NADH + 2 H(+). It participates in amine and polyamine biosynthesis; betaine biosynthesis via choline pathway; betaine aldehyde from choline (cytochrome c reductase route): step 1/1. Its function is as follows. Involved in the biosynthesis of the osmoprotectant glycine betaine. Catalyzes the oxidation of choline to betaine aldehyde and betaine aldehyde to glycine betaine at the same rate. This chain is Oxygen-dependent choline dehydrogenase, found in Burkholderia multivorans (strain ATCC 17616 / 249).